Reading from the N-terminus, the 150-residue chain is Large ribosomal subunit protein bL9 (150 aa).

Belongs to the bacterial ribosomal protein bL9 family.

Its function is as follows. Binds to the 23S rRNA. This is Large ribosomal subunit protein bL9 from Shewanella pealeana (strain ATCC 700345 / ANG-SQ1).